A 78-amino-acid chain; its full sequence is MKSSIHPEYKKFLIKVGSDVFETMSTHPTGEILMDVDFRKHPAWNKDSGNVVNQSNKSVSDFNKRFSGLSFGSKKEAS.

This sequence belongs to the bacterial ribosomal protein bL31 family. Type A subfamily. As to quaternary structure, part of the 50S ribosomal subunit.

Binds the 23S rRNA. The polypeptide is Large ribosomal subunit protein bL31 (rpmE) (Rickettsia conorii (strain ATCC VR-613 / Malish 7)).